The chain runs to 55 residues: Large ribosomal subunit protein bL33 (55 aa).

Belongs to the bacterial ribosomal protein bL33 family.

In Cereibacter sphaeroides (strain ATCC 17029 / ATH 2.4.9) (Rhodobacter sphaeroides), this protein is Large ribosomal subunit protein bL33.